The chain runs to 359 residues: GTP cyclohydrolase FolE2 (359 aa).

Belongs to the GTP cyclohydrolase IV family.

It carries out the reaction GTP + H2O = 7,8-dihydroneopterin 3'-triphosphate + formate + H(+). It functions in the pathway cofactor biosynthesis; 7,8-dihydroneopterin triphosphate biosynthesis; 7,8-dihydroneopterin triphosphate from GTP: step 1/1. Converts GTP to 7,8-dihydroneopterin triphosphate. This is GTP cyclohydrolase FolE2 from Cereibacter sphaeroides (strain ATCC 17029 / ATH 2.4.9) (Rhodobacter sphaeroides).